A 283-amino-acid chain; its full sequence is Bifunctional protein FolD (283 aa).

NADP(+) contacts are provided by residues Gly-164 to Ser-166, Ser-189, and Ile-230.

This sequence belongs to the tetrahydrofolate dehydrogenase/cyclohydrolase family. In terms of assembly, homodimer.

The enzyme catalyses (6R)-5,10-methylene-5,6,7,8-tetrahydrofolate + NADP(+) = (6R)-5,10-methenyltetrahydrofolate + NADPH. The catalysed reaction is (6R)-5,10-methenyltetrahydrofolate + H2O = (6R)-10-formyltetrahydrofolate + H(+). The protein operates within one-carbon metabolism; tetrahydrofolate interconversion. Functionally, catalyzes the oxidation of 5,10-methylenetetrahydrofolate to 5,10-methenyltetrahydrofolate and then the hydrolysis of 5,10-methenyltetrahydrofolate to 10-formyltetrahydrofolate. The chain is Bifunctional protein FolD from Pelobacter propionicus (strain DSM 2379 / NBRC 103807 / OttBd1).